The primary structure comprises 214 residues: 3-isopropylmalate dehydratase small subunit (214 aa).

Belongs to the LeuD family. LeuD type 1 subfamily. In terms of assembly, heterodimer of LeuC and LeuD.

It carries out the reaction (2R,3S)-3-isopropylmalate = (2S)-2-isopropylmalate. It functions in the pathway amino-acid biosynthesis; L-leucine biosynthesis; L-leucine from 3-methyl-2-oxobutanoate: step 2/4. Catalyzes the isomerization between 2-isopropylmalate and 3-isopropylmalate, via the formation of 2-isopropylmaleate. In Pseudomonas fluorescens (strain ATCC BAA-477 / NRRL B-23932 / Pf-5), this protein is 3-isopropylmalate dehydratase small subunit.